The chain runs to 134 residues: Small ribosomal subunit protein uS11 (134 aa).

This sequence belongs to the universal ribosomal protein uS11 family. As to quaternary structure, part of the 30S ribosomal subunit. Interacts with proteins S7 and S18. Binds to IF-3.

In terms of biological role, located on the platform of the 30S subunit, it bridges several disparate RNA helices of the 16S rRNA. Forms part of the Shine-Dalgarno cleft in the 70S ribosome. The polypeptide is Small ribosomal subunit protein uS11 (Albidiferax ferrireducens (strain ATCC BAA-621 / DSM 15236 / T118) (Rhodoferax ferrireducens)).